Here is a 160-residue protein sequence, read N- to C-terminus: Large ribosomal subunit protein uL22c (160 aa).

It belongs to the universal ribosomal protein uL22 family. As to quaternary structure, part of the 50S ribosomal subunit.

The protein resides in the plastid. Its subcellular location is the chloroplast. This protein binds specifically to 23S rRNA. Its function is as follows. The globular domain of the protein is located near the polypeptide exit tunnel on the outside of the subunit, while an extended beta-hairpin is found that lines the wall of the exit tunnel in the center of the 70S ribosome. The protein is Large ribosomal subunit protein uL22c (rpl22) of Eucalyptus globulus subsp. globulus (Tasmanian blue gum).